Consider the following 466-residue polypeptide: MSTRTVSSSSYRRMFGGPGTASRPSSSRSYVTTSTRTYSLGSALRPSTSRSLYTSSPGGVYATRSSAVRLRSSVPGVRLLQDAVDFSLADAINTEFKNTRTNEKVELQELNDRFANYIDKVRFLEQQNKILLAELEQLKGQGKSRLGDLYEEEMRELRRQVDQLTNDKARVEVERDNLAEDIMRLREKLQEETLQREEAESTLQSFRQDVDNASLARLDLERKVESLQEEIAFLKKLHDEEIQELQAQIQEQHVQIDMDVSKPDLTAALRDVRQQYESVAAKNLQEAEEWYKSKFADLSEAANRNNDALRQAKQESNEYRRQVQSLTCEVDALKGTNESLERQMREMEENFAVEAANYQDTIGRLQDEIQNMKEEMARHLREYQDLLNVKMALDIEIATYRKLLEGEESRISLPLPNFSSLNLRETNLESLPLVDTHSKRTLLIKTVETRDGQVINETSQHHDDLE.

2 stretches are compositionally biased toward low complexity: residues 1 to 13 (MSTR…SYRR) and 20 to 31 (TASRPSSSRSYV). Residues 1-31 (MSTRTVSSSSYRRMFGGPGTASRPSSSRSYV) form a disordered region. S2 is modified (N-acetylserine). Positions 2–95 (STRTVSSSSY…FSLADAINTE (94 aa)) are head. Residue S7 is modified to Phosphoserine; alternate. S7 is a glycosylation site (O-linked (GlcNAc) serine; alternate). Phosphoserine occurs at positions 8, 9, and 10. T20 bears the Phosphothreonine mark. Phosphoserine is present on residues S25 and S26. Residue T33 is glycosylated (O-linked (GlcNAc) threonine). S34 is a glycosylation site (O-linked (GlcNAc) serine; alternate). At S34 the chain carries Phosphoserine; by PKC; alternate. S39 carries the post-translational modification Phosphoserine; by CaMK2, PKA, PKC and ROCK2. A phosphoserine mark is found at S42, S47, S49, and S51. The residue at position 53 (Y53) is a Phosphotyrosine. S55 is modified (phosphoserine). S56 is modified (phosphoserine; by CDK5 and CDK1). Y61 is subject to Phosphotyrosine. S66 is modified (phosphoserine). Phosphoserine; by AURKB and ROCK2 is present on S72. A phosphoserine mark is found at S73 and S87. Positions 96-131 (FKNTRTNEKVELQELNDRFANYIDKVRFLEQQNKIL) are coil 1A. Residues 96 to 131 (FKNTRTNEKVELQELNDRFANYIDKVRFLEQQNKIL) are a coiled coil. Positions 103 to 411 (EKVELQELND…KLLEGEESRI (309 aa)) constitute an IF rod domain. K104 participates in a covalent cross-link: Glycyl lysine isopeptide (Lys-Gly) (interchain with G-Cter in SUMO2). Y117 carries the post-translational modification Phosphotyrosine. 3 positions are modified to N6-acetyllysine; alternate: K120, K129, and K139. An N6-succinyllysine; alternate mark is found at K120 and K129. Glycyl lysine isopeptide (Lys-Gly) (interchain with G-Cter in SUMO2); alternate cross-links involve residues K120, K129, and K139. The interval 132–153 (LAELEQLKGQGKSRLGDLYEEE) is linker 1. S144 bears the Phosphoserine mark. Residues 154–245 (MRELRRQVDQ…KLHDEEIQEL (92 aa)) adopt a coiled-coil conformation. Positions 154-245 (MRELRRQVDQ…KLHDEEIQEL (92 aa)) are coil 1B. K168 is modified (N6-acetyllysine). Position 188 is an N6-acetyllysine; alternate (K188). K188 carries the N6-succinyllysine; alternate modification. A Phosphoserine modification is found at S214. Residue K223 is modified to N6-acetyllysine; alternate. K223 participates in a covalent cross-link: Glycyl lysine isopeptide (Lys-Gly) (interchain with G-Cter in SUMO2); alternate. S226 bears the Phosphoserine mark. K235 is subject to N6-acetyllysine. Residues 246 to 268 (QAQIQEQHVQIDMDVSKPDLTAA) form a linker 12 region. K262 participates in a covalent cross-link: Glycyl lysine isopeptide (Lys-Gly) (interchain with G-Cter in SUMO2). The tract at residues 269 to 407 (LRDVRQQYES…ATYRKLLEGE (139 aa)) is coil 2. At K294 the chain carries N6-acetyllysine; alternate. K294 carries the N6-succinyllysine; alternate modification. K294 participates in a covalent cross-link: Glycyl lysine isopeptide (Lys-Gly) (interchain with G-Cter in SUMO2); alternate. A Phosphoserine modification is found at S299. The stretch at 303–407 (NRNNDALRQA…ATYRKLLEGE (105 aa)) forms a coiled coil. K313 participates in a covalent cross-link: Glycyl lysine isopeptide (Lys-Gly) (interchain with G-Cter in SUMO2). The residue at position 325 (S325) is a Phosphoserine. The [IL]-x-C-x-x-[DE] motif signature appears at 326 to 329 (LTCE). At K373 the chain carries N6-acetyllysine; alternate. Residue K373 forms a Glycyl lysine isopeptide (Lys-Gly) (interchain with G-Cter in SUMO2); alternate linkage. The tail stretch occupies residues 408-466 (ESRISLPLPNFSSLNLRETNLESLPLVDTHSKRTLLIKTVETRDGQVINETSQHHDDLE). Phosphoserine is present on residues S409, S412, S419, and S420. Residue T426 is modified to Phosphothreonine. S430 bears the Phosphoserine mark. Residue T436 is modified to Phosphothreonine. At S438 the chain carries Phosphoserine. Residue K439 forms a Glycyl lysine isopeptide (Lys-Gly) (interchain with G-Cter in SUMO2) linkage. The residue at position 445 (K445) is an N6-acetyllysine; alternate. N6-succinyllysine; alternate is present on K445. K445 participates in a covalent cross-link: Glycyl lysine isopeptide (Lys-Gly) (interchain with G-Cter in SUMO2); alternate. Residue K445 forms a Glycyl lysine isopeptide (Lys-Gly) (interchain with G-Cter in SUMO1); alternate linkage. T446 and T458 each carry phosphothreonine. Position 459 is a phosphoserine (S459).

Belongs to the intermediate filament family. Homomer assembled from elementary dimers. Identified in complexes that contain VIM, EZR, AHNAK, BFSP1, BFSP2, ANK2, PLEC, PRX and spectrin. Interacts with BCAS3. Interacts with LGSN. Interacts with SYNM. Interacts (via rod region) with PLEC (via CH 1 domain). Interacts with STK33. Interacts with LARP6. Interacts with RAB8B. Interacts with TOR1A; the interaction associates TOR1A with the cytoskeleton. Interacts with TOR1AIP1. Interacts with TOR1AIP1. Interacts with DIAPH1. Interacts with EPPK1; interaction is dependent of higher-order structure of intermediate filament. Interacts with the non-receptor tyrosine kinase SRMS; the interaction leads to phosphorylation of VIM. Interacts with NOD2. Interacts (via head region) with CORO1C. Interacts with HDGF. Interacts with PRKCE (via phorbol-ester/DAG-type 2 domain). Interacts with BFSP2. Interacts with PPL. Interacts with PKP1 and PKP2. Interacts with SCRIB (via PDZ domains); the interaction protects SCRIB from proteasomal degradation and facilitates SCRIB localization to intermediate filaments, the interaction is reduced by cell contact inhibition. In terms of processing, one of the most prominent phosphoproteins in various cells of mesenchymal origin. Phosphorylation is enhanced during cell division, at which time vimentin filaments are significantly reorganized. Phosphorylation by PKN1 inhibits the formation of filaments. Filament disassembly during mitosis is promoted by phosphorylation at Ser-55 as well as by nestin. Phosphorylated at Ser-56 by CDK5 during neutrophil secretion in the cytoplasm. Phosphorylated by STK33. Phosphorylated on tyrosine residues by SRMS. Post-translationally, S-nitrosylation is induced by interferon-gamma and oxidatively-modified low-densitity lipoprotein (LDL(ox)) possibly implicating the iNOS-S100A8/9 transnitrosylase complex.

The protein localises to the cytoplasm. It is found in the cytoskeleton. Its subcellular location is the nucleus matrix. The protein resides in the cell membrane. Vimentins are class-III intermediate filaments found in various non-epithelial cells, especially mesenchymal cells. Vimentin is attached to the nucleus, endoplasmic reticulum, and mitochondria, either laterally or terminally. Plays a role in cell directional movement, orientation, cell sheet organization and Golgi complex polarization at the cell migration front. Protects SCRIB from proteasomal degradation and facilitates its localization to intermediate filaments in a cell contact-mediated manner. Functionally, involved with LARP6 in the stabilization of type I collagen mRNAs for CO1A1 and CO1A2. This chain is Vimentin (VIM), found in Sus scrofa (Pig).